The sequence spans 297 residues: Tyrosine recombinase XerD (297 aa).

The 85-residue stretch at 2–86 (KKLDPIIEQF…CLRKFFRFLC (85 aa)) folds into the Core-binding (CB) domain. The Tyr recombinase domain maps to 107 to 291 (QLPKSLSEEQ…AKTRLKSIHK (185 aa)). Catalysis depends on residues Arg-147, Lys-171, His-243, Arg-246, and His-269. Catalysis depends on Tyr-278, which acts as the O-(3'-phospho-DNA)-tyrosine intermediate.

This sequence belongs to the 'phage' integrase family. XerD subfamily. Forms a cyclic heterotetrameric complex composed of two molecules of XerC and two molecules of XerD.

It localises to the cytoplasm. In terms of biological role, site-specific tyrosine recombinase, which acts by catalyzing the cutting and rejoining of the recombining DNA molecules. The XerC-XerD complex is essential to convert dimers of the bacterial chromosome into monomers to permit their segregation at cell division. It also contributes to the segregational stability of plasmids. This chain is Tyrosine recombinase XerD, found in Haemophilus ducreyi (strain 35000HP / ATCC 700724).